The chain runs to 169 residues: S-ribosylhomocysteine lyase (169 aa).

Fe cation is bound by residues His54, His58, and Cys128.

The protein belongs to the LuxS family. Homodimer. Fe cation is required as a cofactor.

The catalysed reaction is S-(5-deoxy-D-ribos-5-yl)-L-homocysteine = (S)-4,5-dihydroxypentane-2,3-dione + L-homocysteine. Functionally, involved in the synthesis of autoinducer 2 (AI-2) which is secreted by bacteria and is used to communicate both the cell density and the metabolic potential of the environment. The regulation of gene expression in response to changes in cell density is called quorum sensing. Catalyzes the transformation of S-ribosylhomocysteine (RHC) to homocysteine (HC) and 4,5-dihydroxy-2,3-pentadione (DPD). In Shewanella pealeana (strain ATCC 700345 / ANG-SQ1), this protein is S-ribosylhomocysteine lyase.